A 506-amino-acid chain; its full sequence is MATDWLGSIVSINCGESLGVYQGRVSAVDQVSQTISLTRPFHNGVKCLVPEVTFRAGDITELKILEIPGPGDSRQCGDLQQADTGIPGVGCQVGPSQNGTGKMLKKPFSSSAPQNIPRRTDMKNQDIIISPQQQCSKSYMDRHMETLSQSKGFRRRHNSWSSSSRHPNQVTPKKSGLKNGQMKSKDDECFGDDIDEIPDTDFDFEGNLALFDKAAVFEEIETYERRSGTRSRGTPNEKPARYRHDENILESEPIVYRRIVVPQNANKEFCTDSGLVVPSVSYELHKKLLSVAEKHGLTLERRLEMTGVCASQMALSLLGGPNRLNPKNVHQRPTVALLCGPHVKGAQGISCGRHLSNHDVHVILFLPNFVKMLESITNELNLFSSTQGQQVSSVKDLPDTPVDLVINCLDCHENAFLRDQPWYKAVVDWANQNRAPVLSIDPPISEMEQGIDAKWSLALGLPLPLGERAGRVYLCDIGIPQKVFQEVGINYHSPFGCKFVIPLHST.

Residues 1–68 (MATDWLGSIV…ITELKILEIP (68 aa)) enclose the Sm domain. A required for P-body targeting and interaction with DCP1A region spans residues 1–79 (MATDWLGSIV…PGDSRQCGDL (79 aa)). Disordered regions lie at residues 99 to 118 (GTGK…NIPR) and 149 to 188 (QSKG…KDDE). Positions 189–294 (CFGDDIDEIP…HKKLLSVAEK (106 aa)) are required for interaction with DDX6. One can recognise a DFDF domain in the interval 190–226 (FGDDIDEIPDTDFDFEGNLALFDKAAVFEEIETYERR). The region spanning 281 to 485 (SYELHKKLLS…DIGIPQKVFQ (205 aa)) is the YjeF N-terminal domain.

Belongs to the EDC3 family.

It localises to the cytoplasm. The protein localises to the P-body. Its function is as follows. Binds single-stranded RNA. Involved in the process of mRNA degradation and in the positive regulation of mRNA decapping. The sequence is that of Enhancer of mRNA-decapping protein 3 (EDC3) from Gallus gallus (Chicken).